A 105-amino-acid chain; its full sequence is Protein LBH (105 aa).

Positions 18-104 (MTEVMMNTQP…CEETAKENKE (87 aa)) constitute an LBH domain. At Ser-63 the chain carries Phosphoserine. Acidic residues predominate over residues 86–96 (LVQEDEQDNCE). The interval 86 to 105 (LVQEDEQDNCEETAKENKEQ) is disordered.

Belongs to the LBH family. Highly expressed in heart, and expressed at low levels in placenta, lung, skeletal muscle, kidney and liver.

The protein resides in the nucleus. It localises to the cytoplasm. Functionally, transcriptional activator which may act in mitogen-activated protein kinase signaling pathway. This is Protein LBH from Homo sapiens (Human).